The chain runs to 982 residues: Nitrate reductase [NADPH] (982 aa).

Residues M1–L128 form a disordered region. A compositionally biased stretch (basic and acidic residues) spans Q10–Q20. Residues T63–S110 are compositionally biased toward low complexity. C240 provides a ligand contact to Mo-molybdopterin. Residues T617 to T692 form the Cytochrome b5 heme-binding domain. H652 and H675 together coordinate heme. The FAD-binding FR-type domain maps to K721 to Q836. FAD is bound by residues R776–T779, L794–Y798, Q810–T812, S860, and T863. M952–M961 contacts NADP(+).

Belongs to the nitrate reductase family. Homodimer. FAD is required as a cofactor. It depends on heme as a cofactor. Mo-molybdopterin serves as cofactor.

The catalysed reaction is nitrite + NADP(+) + H2O = nitrate + NADPH + H(+). The protein operates within nitrogen metabolism; nitrate reduction (assimilation). Its function is as follows. Nitrate reductase is a key enzyme involved in the first step of nitrate assimilation in plants, fungi and bacteria. This Neurospora crassa (strain ATCC 24698 / 74-OR23-1A / CBS 708.71 / DSM 1257 / FGSC 987) protein is Nitrate reductase [NADPH] (nit-3).